Reading from the N-terminus, the 936-residue chain is General transcription factor II-I repeat domain-containing protein 2 (936 aa).

One copy of the GTF2I-like 1 repeat lies at 95 to 189 (EACPGEAQLL…FLGAESQLGG (95 aa)). Positions 199–222 (PTVPPNDSYGPVSVKTEPMEDSGT) are disordered. The stretch at 319 to 413 (LSGLEKIKQL…LPGLELSNVG (95 aa)) is one GTF2I-like 2 repeat.

This sequence belongs to the TFII-I family. In terms of tissue distribution, ubiquitous.

It is found in the nucleus. The polypeptide is General transcription factor II-I repeat domain-containing protein 2 (Gtf2ird2) (Mus musculus (Mouse)).